The following is a 98-amino-acid chain: Co-chaperonin GroES (98 aa).

This sequence belongs to the GroES chaperonin family. In terms of assembly, heptamer of 7 subunits arranged in a ring. Interacts with the chaperonin GroEL.

It localises to the cytoplasm. Functionally, together with the chaperonin GroEL, plays an essential role in assisting protein folding. The GroEL-GroES system forms a nano-cage that allows encapsulation of the non-native substrate proteins and provides a physical environment optimized to promote and accelerate protein folding. GroES binds to the apical surface of the GroEL ring, thereby capping the opening of the GroEL channel. In Clavibacter michiganensis subsp. michiganensis (strain NCPPB 382), this protein is Co-chaperonin GroES.